A 211-amino-acid polypeptide reads, in one-letter code: C-type lectin domain family 2 member L (211 aa).

A disordered region spans residues 1–53; that stretch reads MEPAREPPARARPPPPAARPAPAAPRPRSPAEAEARGPEGLLRRSGSGYEGST. A compositionally biased stretch (pro residues) spans 10–28; sequence RARPPPPAARPAPAAPRPR. At serine 29 the chain carries Phosphoserine. A helical membrane pass occupies residues 66–86; it reads LLLGAIAVLLFAILVVMSILA. 3 disulfides stabilise this stretch: cysteine 97–cysteine 108, cysteine 125–cysteine 205, and cysteine 184–cysteine 197. The C-type lectin domain maps to 104 to 206; it reads YGRKCYYFSE…CLTTRPWVCS (103 aa).

Its subcellular location is the membrane. The polypeptide is C-type lectin domain family 2 member L (Clec2l) (Rattus norvegicus (Rat)).